We begin with the raw amino-acid sequence, 635 residues long: 1-deoxy-D-xylulose-5-phosphate synthase (635 aa).

Thiamine diphosphate contacts are provided by residues H79 and 120–122 (GHS). Residue D151 participates in Mg(2+) binding. Thiamine diphosphate-binding positions include 152–153 (GA), N182, Y291, and E372. N182 contributes to the Mg(2+) binding site.

Belongs to the transketolase family. DXPS subfamily. In terms of assembly, homodimer. It depends on Mg(2+) as a cofactor. The cofactor is thiamine diphosphate.

It catalyses the reaction D-glyceraldehyde 3-phosphate + pyruvate + H(+) = 1-deoxy-D-xylulose 5-phosphate + CO2. It functions in the pathway metabolic intermediate biosynthesis; 1-deoxy-D-xylulose 5-phosphate biosynthesis; 1-deoxy-D-xylulose 5-phosphate from D-glyceraldehyde 3-phosphate and pyruvate: step 1/1. Functionally, catalyzes the acyloin condensation reaction between C atoms 2 and 3 of pyruvate and glyceraldehyde 3-phosphate to yield 1-deoxy-D-xylulose-5-phosphate (DXP). In Xylella fastidiosa (strain M23), this protein is 1-deoxy-D-xylulose-5-phosphate synthase.